The following is a 294-amino-acid chain: Elongation factor Ts (294 aa).

The involved in Mg(2+) ion dislocation from EF-Tu stretch occupies residues 79–82; the sequence is TDFV.

The protein belongs to the EF-Ts family.

It is found in the cytoplasm. Associates with the EF-Tu.GDP complex and induces the exchange of GDP to GTP. It remains bound to the aminoacyl-tRNA.EF-Tu.GTP complex up to the GTP hydrolysis stage on the ribosome. This chain is Elongation factor Ts, found in Geobacillus thermodenitrificans (strain NG80-2).